Here is a 162-residue protein sequence, read N- to C-terminus: UPF0178 protein Rsph17029_2512 (162 aa).

Belongs to the UPF0178 family.

The protein is UPF0178 protein Rsph17029_2512 of Cereibacter sphaeroides (strain ATCC 17029 / ATH 2.4.9) (Rhodobacter sphaeroides).